The following is a 193-amino-acid chain: 5'RNA triphosphatase A449R (193 aa).

The cofactor is Mn(2+).

It carries out the reaction a 5'-end triphospho-ribonucleoside in mRNA + H2O = a 5'-end diphospho-ribonucleoside in mRNA + phosphate + H(+). In terms of biological role, catalyzes the first stes of cap formation: by removing the gamma-phosphate from the 5'-triphosphate end of nascent mRNA to yield a diphosphate end. The polypeptide is 5'RNA triphosphatase A449R (A449R) (Chlorella (PBCV-1)).